The following is a 314-amino-acid chain: Protoheme IX farnesyltransferase (314 aa).

The next 8 membrane-spanning stretches (helical) occupy residues 31–51 (VMSLVIFTALVGMAMAPGHFH), 52–72 (PVLAITSLLCIAVGAGASGAL), 119–139 (ILVNWIAGALLAFTIFFYVVI), 152–172 (IVIGGAAGALPPVVAWAAVTG), 179–199 (LLLFAIIFFWTPPHFWALALF), 225–245 (ILLYTIVLIAVAAAPWALGYF), 247–267 (AVYGVVSLILGAGMLVLAINV), and 284–304 (FAFSILYLFALFATLLAEVVF).

It belongs to the UbiA prenyltransferase family. Protoheme IX farnesyltransferase subfamily.

It is found in the cell inner membrane. It carries out the reaction heme b + (2E,6E)-farnesyl diphosphate + H2O = Fe(II)-heme o + diphosphate. It participates in porphyrin-containing compound metabolism; heme O biosynthesis; heme O from protoheme: step 1/1. Its function is as follows. Converts heme B (protoheme IX) to heme O by substitution of the vinyl group on carbon 2 of heme B porphyrin ring with a hydroxyethyl farnesyl side group. The protein is Protoheme IX farnesyltransferase of Bradyrhizobium diazoefficiens (strain JCM 10833 / BCRC 13528 / IAM 13628 / NBRC 14792 / USDA 110).